Consider the following 714-residue polypeptide: Polyribonucleotide nucleotidyltransferase (714 aa).

Residues D484 and D490 each coordinate Mg(2+). The region spanning 551–610 (PRIMVINIAPEKVREVIGPGGKVINKIIDETGVKIDTEDDGKITVAGENTESAQRAIDMI) is the KH domain. Residues 620–688 (GEKYLGRVTK…DQGKMTLSRK (69 aa)) enclose the S1 motif domain. A disordered region spans residues 685–714 (LSRKALLPKPERKEKKNFDKKSEDQNSEDK). Over residues 693 to 714 (KPERKEKKNFDKKSEDQNSEDK) the composition is skewed to basic and acidic residues.

Belongs to the polyribonucleotide nucleotidyltransferase family. Mg(2+) is required as a cofactor.

It is found in the cytoplasm. The catalysed reaction is RNA(n+1) + phosphate = RNA(n) + a ribonucleoside 5'-diphosphate. In terms of biological role, involved in mRNA degradation. Catalyzes the phosphorolysis of single-stranded polyribonucleotides processively in the 3'- to 5'-direction. This chain is Polyribonucleotide nucleotidyltransferase, found in Finegoldia magna (strain ATCC 29328 / DSM 20472 / WAL 2508) (Peptostreptococcus magnus).